The following is a 538-amino-acid chain: MAKMIAYDDEARQGMLAGLDKLADTVKVTLGPKGRNVVLDKTYGAPTITNDGVSIAKEIDLDDPYERIGAELVKEVAKKTDDVAGDGTTTATVLAQSLVHEGLKNVTAGSNPIALRRGIEKAADAIVKELVAAAKDVETKDQIAATATISAADPEVGEKIAEALDKVGQDGVVTVEDNNRFGLDLDFTEGMRFDKGYIAPYFVTNAEDQTAVLEDPYILLTSGKLSSQQDVVHIAELVMKTGKPLLIIAEDVDGEALPTLILNNIRGTFKSCAVKAPGFGDRRKAMLQDMAILTGAQVVSDELGLKLDSVDMSVLGTAKKVIVSKDETTIVSGGGSKEDVAARVAQIRGEIANTDSDYDREKLQERLAKLAGGVAVIKVGAATEVEAKERKHRIEDAVRNAKAAIEEGLLPGGGVALIQAAAKAKDDVKLEGDEATGAAIVFRAVEAPIKQIAENAGLSGDVVIDKVRSLPDGQGLNAATNEYEDLLAAGVTDPVKVTRSALQNAASIAGLFLTTEAVVANKPEPPAAAPAAGADMGY.

Residues 29–32 (TLGP), 86–90 (DGTTT), Gly413, 477–479 (NAA), and Asp493 each bind ATP.

Belongs to the chaperonin (HSP60) family. Forms a cylinder of 14 subunits composed of two heptameric rings stacked back-to-back. Interacts with the co-chaperonin GroES.

The protein resides in the cytoplasm. It carries out the reaction ATP + H2O + a folded polypeptide = ADP + phosphate + an unfolded polypeptide.. Together with its co-chaperonin GroES, plays an essential role in assisting protein folding. The GroEL-GroES system forms a nano-cage that allows encapsulation of the non-native substrate proteins and provides a physical environment optimized to promote and accelerate protein folding. This Bifidobacterium adolescentis (strain ATCC 15703 / DSM 20083 / NCTC 11814 / E194a) protein is Chaperonin GroEL.